Here is a 75-residue protein sequence, read N- to C-terminus: Putative antitoxin VapB29 (75 aa).

Possibly the antitoxic component of a type II toxin-antitoxin (TA) system. Its cognate toxin is VapC29 (Potential). In Mycobacterium tuberculosis (strain CDC 1551 / Oshkosh), this protein is Putative antitoxin VapB29 (vapB29).